Consider the following 430-residue polypeptide: Cortical fragment-lytic enzyme (430 aa).

2 LysM domains span residues 3–47 (QIVT…ALIV) and 52–96 (NNYY…QLYV). In terms of domain architecture, GH18 spans 104 to 430 (VESIAYLQPS…VENFTITKKG (327 aa)). The active-site Proton donor is the Glu-219.

It belongs to the glycosyl hydrolase 18 family. Chitinase class II subfamily.

The protein resides in the spore cortex. Inhibited by diethylpyrocarbonate. In terms of biological role, N-acetylglucosaminidase involved in cortex peptidoglycan degradation during germination. Cleaves only partially degraded spore peptidoglycans. Recognizes muramic acid delta-lactam residues specific to spore peptidoglycans. In Bacillus cereus, this protein is Cortical fragment-lytic enzyme.